Reading from the N-terminus, the 362-residue chain is Peptide chain release factor 1 (362 aa).

Residue glutamine 238 is modified to N5-methylglutamine.

It belongs to the prokaryotic/mitochondrial release factor family. Post-translationally, methylated by PrmC. Methylation increases the termination efficiency of RF1.

Its subcellular location is the cytoplasm. Its function is as follows. Peptide chain release factor 1 directs the termination of translation in response to the peptide chain termination codons UAG and UAA. The chain is Peptide chain release factor 1 from Psychrobacter arcticus (strain DSM 17307 / VKM B-2377 / 273-4).